The sequence spans 235 residues: 2,3-bisphosphoglycerate-dependent phosphoglycerate mutase 1 (235 aa).

Substrate contacts are provided by residues 8–15 (RHGESVAN), 21–22 (TG), Arg60, 87–90 (ERHY), Lys98, and 114–115 (RR). His9 serves as the catalytic Tele-phosphohistidine intermediate. The Proton donor/acceptor role is filled by Glu87.

This sequence belongs to the phosphoglycerate mutase family. BPG-dependent PGAM subfamily.

The catalysed reaction is (2R)-2-phosphoglycerate = (2R)-3-phosphoglycerate. The protein operates within carbohydrate degradation; glycolysis; pyruvate from D-glyceraldehyde 3-phosphate: step 3/5. Its function is as follows. Catalyzes the interconversion of 2-phosphoglycerate and 3-phosphoglycerate. This chain is 2,3-bisphosphoglycerate-dependent phosphoglycerate mutase 1, found in Latilactobacillus sakei subsp. sakei (strain 23K) (Lactobacillus sakei subsp. sakei).